A 201-amino-acid chain; its full sequence is Eukaryotic translation initiation factor 4E-5 (201 aa).

Cys122 and Cys126 are oxidised to a cystine.

This sequence belongs to the eukaryotic initiation factor 4E family. As to quaternary structure, eIF4F is a multi-subunit complex, the composition of which varies with external and internal environmental conditions. It is composed of at least eIF4A, eIF4E and eIF4G. eIF4E is also known to interact with other partners. Enriched in the germline.

Functionally, recognizes and binds the 7-methylguanosine-containing mRNA cap during an early step in the initiation of protein synthesis and facilitates ribosome binding by inducing the unwinding of the mRNAs secondary structures. All 5 eIF4E proteins bind monomethyl cap structures. Only ife-1, ife-2 and ife-5 bind trimethyl cap structures which result from trans-splicing. Translation of trimethyl cap structure mRNAs may be regulated by intracellular redox state; disulfide bonds change the width and depth of the cap-binding cavity determining selectivity to mRNA caps. This is Eukaryotic translation initiation factor 4E-5 (ife-5) from Caenorhabditis elegans.